The sequence spans 316 residues: tRNA-cytidine(32) 2-sulfurtransferase (316 aa).

The PP-loop motif signature appears at 45-50; the sequence is SGGKDS. Positions 120, 123, and 211 each coordinate [4Fe-4S] cluster.

Belongs to the TtcA family. As to quaternary structure, homodimer. It depends on Mg(2+) as a cofactor. [4Fe-4S] cluster serves as cofactor.

The protein localises to the cytoplasm. It carries out the reaction cytidine(32) in tRNA + S-sulfanyl-L-cysteinyl-[cysteine desulfurase] + AH2 + ATP = 2-thiocytidine(32) in tRNA + L-cysteinyl-[cysteine desulfurase] + A + AMP + diphosphate + H(+). Its pathway is tRNA modification. In terms of biological role, catalyzes the ATP-dependent 2-thiolation of cytidine in position 32 of tRNA, to form 2-thiocytidine (s(2)C32). The sulfur atoms are provided by the cysteine/cysteine desulfurase (IscS) system. This Shewanella sediminis (strain HAW-EB3) protein is tRNA-cytidine(32) 2-sulfurtransferase.